The sequence spans 1007 residues: Protocadherin alpha-C2 (1007 aa).

A signal peptide spans 1 to 42; the sequence is MEQAGTRPAATEHPRLRRPMPWLLLLPLLLLLLLLLPGPAAS. 5 Cadherin domains span residues 43–148, 149–257, 258–365, 374–469, and 470–579; these read QLRY…SPRF, PRPN…SPAF, DQST…APEV, VPEN…PPSF, and LEDS…APHI. At 43 to 708 the chain is on the extracellular side; that stretch reads QLRYSVPEEQ…RTYSEITLYL (666 aa). Residues Asn280 and Asn436 are each glycosylated (N-linked (GlcNAc...) asparagine). Asn586 and Asn657 each carry an N-linked (GlcNAc...) asparagine glycan. The region spanning 594 to 691 is the Cadherin 6 domain; the sequence is VPRTAPAGYL…DRVSKILPDT (98 aa). Residues 709 to 729 form a helical membrane-spanning segment; it reads IIALSTVSFIFLLTIIILSII. Topologically, residues 730–1007 are cytoplasmic; it reads KCYRYTAYGT…GNSTTDNSDQ (278 aa). PXXP repeat units follow at residues 856-859, 889-892, 930-933, and 948-951; these read PRQP, PGGP, PGNP, and PGSP. The tract at residues 856–951 is 4 X 4 AA repeats of P-X-X-P; sequence PRQPNPDWRY…PDKFIIPGSP (96 aa). Residues 885-1007 form a disordered region; it reads LRAGPGGPDQ…GNSTTDNSDQ (123 aa). The span at 966 to 980 shows a compositional bias: basic and acidic residues; that stretch reads DKSDFITFGKKEETK.

Its subcellular location is the cell membrane. Its function is as follows. Potential calcium-dependent cell-adhesion protein. May be involved in the establishment and maintenance of specific neuronal connections in the brain. The protein is Protocadherin alpha-C2 (PCDHAC2) of Homo sapiens (Human).